A 335-amino-acid polypeptide reads, in one-letter code: Anthranilate phosphoribosyltransferase (335 aa).

Residues Gly79, 82-83 (GD), Thr87, 89-92 (NIST), 107-115 (KHCNQGVSS), and Ser119 each bind 5-phospho-alpha-D-ribose 1-diphosphate. Residue Gly79 participates in anthranilate binding. Ser91 is a binding site for Mg(2+). Asn110 is a binding site for anthranilate. Residue Arg165 coordinates anthranilate. Residues Asp223 and Glu224 each contribute to the Mg(2+) site.

Belongs to the anthranilate phosphoribosyltransferase family. As to quaternary structure, homodimer. Requires Mg(2+) as cofactor.

It catalyses the reaction N-(5-phospho-beta-D-ribosyl)anthranilate + diphosphate = 5-phospho-alpha-D-ribose 1-diphosphate + anthranilate. It functions in the pathway amino-acid biosynthesis; L-tryptophan biosynthesis; L-tryptophan from chorismate: step 2/5. Its function is as follows. Catalyzes the transfer of the phosphoribosyl group of 5-phosphorylribose-1-pyrophosphate (PRPP) to anthranilate to yield N-(5'-phosphoribosyl)-anthranilate (PRA). This chain is Anthranilate phosphoribosyltransferase, found in Buchnera aphidicola subsp. Diuraphis noxia.